Reading from the N-terminus, the 96-residue chain is Co-chaperonin GroES (96 aa).

It belongs to the GroES chaperonin family. Heptamer of 7 subunits arranged in a ring. Interacts with the chaperonin GroEL.

The protein resides in the cytoplasm. In terms of biological role, together with the chaperonin GroEL, plays an essential role in assisting protein folding. The GroEL-GroES system forms a nano-cage that allows encapsulation of the non-native substrate proteins and provides a physical environment optimized to promote and accelerate protein folding. GroES binds to the apical surface of the GroEL ring, thereby capping the opening of the GroEL channel. The chain is Co-chaperonin GroES from Aliivibrio fischeri (strain ATCC 700601 / ES114) (Vibrio fischeri).